Consider the following 364-residue polypeptide: tRNA 2-selenouridine synthase (364 aa).

Positions 14–137 (LIADTPIIDV…LRQTAIQATI (124 aa)) constitute a Rhodanese domain. The S-selanylcysteine intermediate role is filled by cysteine 97.

It belongs to the SelU family. As to quaternary structure, monomer.

It carries out the reaction 5-methylaminomethyl-2-thiouridine(34) in tRNA + selenophosphate + (2E)-geranyl diphosphate + H2O + H(+) = 5-methylaminomethyl-2-selenouridine(34) in tRNA + (2E)-thiogeraniol + phosphate + diphosphate. The enzyme catalyses 5-methylaminomethyl-2-thiouridine(34) in tRNA + (2E)-geranyl diphosphate = 5-methylaminomethyl-S-(2E)-geranyl-thiouridine(34) in tRNA + diphosphate. It catalyses the reaction 5-methylaminomethyl-S-(2E)-geranyl-thiouridine(34) in tRNA + selenophosphate + H(+) = 5-methylaminomethyl-2-(Se-phospho)selenouridine(34) in tRNA + (2E)-thiogeraniol. The catalysed reaction is 5-methylaminomethyl-2-(Se-phospho)selenouridine(34) in tRNA + H2O = 5-methylaminomethyl-2-selenouridine(34) in tRNA + phosphate. Functionally, involved in the post-transcriptional modification of the uridine at the wobble position (U34) of tRNA(Lys), tRNA(Glu) and tRNA(Gln). Catalyzes the conversion of 2-thiouridine (S2U-RNA) to 2-selenouridine (Se2U-RNA). Acts in a two-step process involving geranylation of 2-thiouridine (S2U) to S-geranyl-2-thiouridine (geS2U) and subsequent selenation of the latter derivative to 2-selenouridine (Se2U) in the tRNA chain. The chain is tRNA 2-selenouridine synthase from Shigella dysenteriae serotype 1 (strain Sd197).